A 241-amino-acid chain; its full sequence is Ribonuclease PH (241 aa).

Phosphate-binding positions include Arg89 and 127 to 129 (GTR).

It belongs to the RNase PH family. As to quaternary structure, homohexameric ring arranged as a trimer of dimers.

The enzyme catalyses tRNA(n+1) + phosphate = tRNA(n) + a ribonucleoside 5'-diphosphate. Phosphorolytic 3'-5' exoribonuclease that plays an important role in tRNA 3'-end maturation. Removes nucleotide residues following the 3'-CCA terminus of tRNAs; can also add nucleotides to the ends of RNA molecules by using nucleoside diphosphates as substrates, but this may not be physiologically important. Probably plays a role in initiation of 16S rRNA degradation (leading to ribosome degradation) during starvation. This Stenotrophomonas maltophilia (strain K279a) protein is Ribonuclease PH.